A 59-amino-acid polypeptide reads, in one-letter code: Ribosome modulation factor (59 aa).

It belongs to the ribosome modulation factor family.

Its subcellular location is the cytoplasm. Its function is as follows. During stationary phase, converts 70S ribosomes to an inactive dimeric form (100S ribosomes). This Aeromonas veronii (strain B565) protein is Ribosome modulation factor.